The primary structure comprises 604 residues: Putative O-acetyltransferase SAR0937 (604 aa).

11 helical membrane-spanning segments follow: residues 15 to 35, 43 to 63, 85 to 105, 150 to 170, 176 to 196, 212 to 232, 240 to 260, 267 to 287, 310 to 330, 332 to 352, and 377 to 397; these read YMPG…IYHL, GFLG…SLLL, LLPA…LLKS, AIEE…LLTI, IGFI…FIYS, LQTL…KLKN, YVID…FFII, IYDG…ASVV, YSLY…YVDG, IPVY…ELSY, and FIRM…LVGA. Catalysis depends on residues serine 459, aspartate 581, and histidine 584.

It belongs to the acyltransferase 3 family.

The protein localises to the cell membrane. The polypeptide is Putative O-acetyltransferase SAR0937 (Staphylococcus aureus (strain MRSA252)).